The chain runs to 361 residues: 3-dehydroquinate synthase (361 aa).

Residues 72–77 (SGEKEK), 130–131 (TT), K142, and K151 contribute to the NAD(+) site. The Zn(2+) site is built by E184, H247, and H264.

It belongs to the sugar phosphate cyclases superfamily. Dehydroquinate synthase family. Co(2+) serves as cofactor. The cofactor is Zn(2+). Requires NAD(+) as cofactor.

Its subcellular location is the cytoplasm. The enzyme catalyses 7-phospho-2-dehydro-3-deoxy-D-arabino-heptonate = 3-dehydroquinate + phosphate. It functions in the pathway metabolic intermediate biosynthesis; chorismate biosynthesis; chorismate from D-erythrose 4-phosphate and phosphoenolpyruvate: step 2/7. Its function is as follows. Catalyzes the conversion of 3-deoxy-D-arabino-heptulosonate 7-phosphate (DAHP) to dehydroquinate (DHQ). The sequence is that of 3-dehydroquinate synthase from Bacillus cereus (strain B4264).